Consider the following 185-residue polypeptide: Ribosome-recycling factor (185 aa).

Belongs to the RRF family.

It localises to the cytoplasm. Its function is as follows. Responsible for the release of ribosomes from messenger RNA at the termination of protein biosynthesis. May increase the efficiency of translation by recycling ribosomes from one round of translation to another. The polypeptide is Ribosome-recycling factor (Thermosipho melanesiensis (strain DSM 12029 / CIP 104789 / BI429)).